A 930-amino-acid chain; its full sequence is Protein translocase subunit SecA (930 aa).

ATP contacts are provided by residues Gln83, 101–105, and Asp491; that span reads GEGKT.

This sequence belongs to the SecA family. As to quaternary structure, monomer and homodimer. Part of the essential Sec protein translocation apparatus which comprises SecA, SecYEG and auxiliary proteins SecDF. Other proteins may also be involved.

It is found in the cell inner membrane. Its subcellular location is the cellular thylakoid membrane. The protein resides in the cytoplasm. It carries out the reaction ATP + H2O + cellular proteinSide 1 = ADP + phosphate + cellular proteinSide 2.. Its function is as follows. Part of the Sec protein translocase complex. Interacts with the SecYEG preprotein conducting channel. Has a central role in coupling the hydrolysis of ATP to the transfer of proteins into and across the cell membrane, serving as an ATP-driven molecular motor driving the stepwise translocation of polypeptide chains across the membrane. Functionally, probably participates in protein translocation into and across both the cytoplasmic and thylakoid membranes in cyanobacterial cells. The protein is Protein translocase subunit SecA of Trichormus variabilis (strain ATCC 29413 / PCC 7937) (Anabaena variabilis).